Reading from the N-terminus, the 1116-residue chain is uncharacterized protein (1116 aa).

EF-hand domains are found at residues 8 to 43, 42 to 77, 166 to 201, and 292 to 327; these read EEQTAFDQLFKIADKQDIGVITGEEAVPFLEKSGLA, LAPQVLGQIWQIADAENRGFLTFSGFVIAMRLVALA, LSTEILARVWNLVDTHKRGALDIREFNTGMHIINLL, and LPEDVLAQIWDLSDTNSNGKLNIGEFCISLYLIKLK. EH domains are found at residues 9 to 106, 134 to 224, and 259 to 348; these read EQTA…DSSK, EMTR…AAST, and DLTS…VAPL. 5 residues coordinate Ca(2+): Asp-305, Asn-307, Asn-309, Lys-311, and Glu-316. Disordered stretches follow at residues 360–454, 703–774, 812–890, 909–978, 1004–1024, 1044–1066, and 1095–1116; these read PSVV…NSPT, SVNL…ASTV, TSLS…NTSA, PFAT…SPQI, TTTHVQHPNSETIPSSTENQY, SNEVSQPFDFDTANESDNDDDEL, and QAAEIKDDDNSSTDEEEHAGHH. A compositionally biased stretch (pro residues) spans 371–381; sequence NPNPTLAPNPT. Residues 401–416 show a composition bias toward polar residues; it reads FSPTLAPQHTSSNATK. A coiled-coil region spans residues 565–707; sequence KAQTEQVNRE…EDGLKSVNLT (143 aa). Over residues 723-749 the composition is skewed to polar residues; the sequence is SFTSNGITTDKPTLPDTTSSVPTQHNS. Low complexity-rich tracts occupy residues 755–774 and 812–827; these read NTLRSPSLNSNNSSAHASTV and TSLSVNNSSVNPSLDS. The span at 864–890 shows a compositional bias: polar residues; that stretch reads SKLTGSARNTAEPVENTSAEPIENTSA. Residues 957-969 show a composition bias toward acidic residues; it reads EIDDDESSSDEEP. Acidic residues-rich tracts occupy residues 1055 to 1066 and 1104 to 1116; these read TANESDNDDDEL and NSSTDEEEHAGHH.

Its subcellular location is the cytoplasm. The protein localises to the cytoskeleton. This is an uncharacterized protein from Schizosaccharomyces pombe (strain 972 / ATCC 24843) (Fission yeast).